The following is a 415-amino-acid chain: MATH domain and coiled-coil domain-containing protein At2g42465 (415 aa).

The MATH domain maps to 6–130 (RKALTLTVTN…NDRFNIEIYI (125 aa)). The stretch at 244–341 (FKLEWLKAKL…LLKDTYSDLK (98 aa)) forms a coiled coil.

The protein is MATH domain and coiled-coil domain-containing protein At2g42465 of Arabidopsis thaliana (Mouse-ear cress).